The sequence spans 79 residues: Large ribosomal subunit protein uL29 (79 aa).

It belongs to the universal ribosomal protein uL29 family.

The sequence is that of Large ribosomal subunit protein uL29 from Tropheryma whipplei (strain TW08/27) (Whipple's bacillus).